A 454-amino-acid polypeptide reads, in one-letter code: Phenylalanine--tRNA ligase, mitochondrial (454 aa).

Residues 141 to 144 (SAHQ), Arg163, 170 to 172 (VHY), 177 to 179 (QME), Glu266, and Phe291 each bind substrate. Residues 327-347 (KSISTSSSSSSSSSSSSSSTL) are disordered. Positions 328–347 (SISTSSSSSSSSSSSSSSTL) are enriched in low complexity. The FDX-ACB domain maps to 361 to 454 (SKYPSCFKDV…LENHLSVKLR (94 aa)).

This sequence belongs to the class-II aminoacyl-tRNA synthetase family. In terms of assembly, monomer.

The protein resides in the mitochondrion matrix. It catalyses the reaction tRNA(Phe) + L-phenylalanine + ATP = L-phenylalanyl-tRNA(Phe) + AMP + diphosphate + H(+). Its function is as follows. Is responsible for the charging of tRNA(Phe) with phenylalanine in mitochondrial translation. In Dictyostelium discoideum (Social amoeba), this protein is Phenylalanine--tRNA ligase, mitochondrial (mpheS).